The primary structure comprises 77 residues: Large ribosomal subunit protein bL28 (77 aa).

This sequence belongs to the bacterial ribosomal protein bL28 family.

This is Large ribosomal subunit protein bL28 from Ralstonia nicotianae (strain ATCC BAA-1114 / GMI1000) (Ralstonia solanacearum).